The sequence spans 504 residues: Hexose transporter 1 (504 aa).

The Cytoplasmic segment spans residues 1–29 (MTKSSKDICSENEGKKNGKSGFFSTSFKY). The chain crosses the membrane as a helical span at residues 30-50 (VLSACIASFIFGYQVSVLNTI). Over 51–78 (KNFIVVEFEWCKGEKDRLNCSNNTIQSS) the chain is Extracellular. A disulfide bond links C61 and C70. A helical transmembrane segment spans residues 79 to 99 (FLLASVFIGAVLGCGFSGYLV). Over 100-104 (QFGRR) the chain is Cytoplasmic. Residues 105 to 125 (LSLLIIYNFFFLVSILTSITH) form a helical membrane-spanning segment. Over 126–129 (HFHT) the chain is Extracellular. A helical transmembrane segment spans residues 130-150 (ILFARLLSGFGIGLVTVSVPM). Residues 151 to 165 (YISEMTHKDKKGAYG) lie on the Cytoplasmic side of the membrane. The helical transmembrane segment at 166–186 (VMHQLFITFGIFVAVMLGLAM) threads the bilayer. An alpha-D-glucose-binding site is contributed by Q169. Q169 serves as a coordination point for beta-D-glucose. At 187-207 (GEGPKADSTEPLTSFAKLWWR) the chain is on the extracellular side. Residues 208 to 228 (LMFLFPSVISLIGILALVVFF) traverse the membrane as a helical segment. Topologically, residues 229–293 (KEETPYFLFE…SALKIPSYRY (65 aa)) are cytoplasmic. The chain crosses the membrane as a helical span at residues 294 to 314 (VIILGCLLSGLQQFTGINVLV). The alpha-D-glucose site is built by Q305, Q306, and N311. Q305 is a binding site for beta-D-glucose. N311 is a beta-D-glucose binding site. Over 315–331 (SNSNELYKEFLDSHLIT) the chain is Extracellular. The chain crosses the membrane as a helical span at residues 332-352 (ILSVVMTAVNFLMTFPAIYIV). N341 serves as a coordination point for beta-D-glucose. Topologically, residues 353–358 (EKLGRK) are cytoplasmic. A helical transmembrane segment spans residues 359-379 (TLLLWGCVGVLVAYLPTAIAN). Over 380–392 (EINRNSNFVKILS) the chain is Extracellular. The helical transmembrane segment at 393–413 (IVATFVMIISFAVSYGPVLWI) threads the bilayer. W412 lines the alpha-D-glucose pocket. The Cytoplasmic segment spans residues 414-429 (YLHEMFPSEIKDSAAS). The helical transmembrane segment at 430-450 (LASLVNWVCAIIVVFPSDIII) threads the bilayer. The Extracellular segment spans residues 451–455 (KKSPS). The helical transmembrane segment at 456–476 (ILFIVFSVMSILTFFFIFFFI) threads the bilayer. Residues 477–504 (KETKGGEIGTSPYITMEERQKHMTKSVV) lie on the Cytoplasmic side of the membrane.

This sequence belongs to the major facilitator superfamily. Sugar transporter (TC 2.A.1.1) family. Homodimer.

It is found in the cell membrane. The enzyme catalyses D-glucose(out) = D-glucose(in). It carries out the reaction D-fructose(out) = D-fructose(in). The catalysed reaction is D-galactose(in) = D-galactose(out). It catalyses the reaction D-mannose(out) = D-mannose(in). The enzyme catalyses D-glucosamine(out) = D-glucosamine(in). It carries out the reaction D-xylose(out) = D-xylose(in). Inhibited by cytochalasin B. Inhibited by compound 3361 (3-O-((undec-10-en)-1-yl)-D-glucose). Inhibited by compound HTI-1. Sodium-independent facilitative hexose transporter. Can transport D-glucose and D-fructose. Can transport D-mannose, D-galactose, D-xylose and D-glucosamine. In Plasmodium falciparum (isolate 3D7), this protein is Hexose transporter 1.